We begin with the raw amino-acid sequence, 457 residues long: Protein PIN-LIKES 2 (457 aa).

Over 1 to 15 (MSGFSSGNVNSRVVD) the chain is Lumenal. Residues 16 to 36 (ILSGVVPLLKLICLTVIGLLL) traverse the membrane as a helical segment. The Cytoplasmic portion of the chain corresponds to 37–54 (AHPKTQLVPRATFRLLSK). The chain crosses the membrane as a helical span at residues 55 to 75 (LVFALFLPCLIFTELGESITL). The Lumenal portion of the chain corresponds to 76–85 (DNIVQWWFIP). Residues 86–106 (VNVLLSAVVGSLIGYLVVLIC) form a helical membrane-spanning segment. At 107–116 (RPPPEFNRFT) the chain is on the cytoplasmic side. Residues 117-137 (IVMTAFGNTGNLLLAIVSSVC) traverse the membrane as a helical segment. Over 138–151 (HTKTNPFGPNCNSR) the chain is Lumenal. The chain crosses the membrane as a helical span at residues 152–172 (GVSYVSFAQWVAVILVYTVVY). Residues 173–291 (HMMEPPLEYY…PVKHILQPPT (119 aa)) are Cytoplasmic-facing. Residues 292 to 312 (IASLLAIIIGSVPQLKSVVFG) traverse the membrane as a helical segment. Topologically, residues 313 to 322 (YDAPLSFITD) are lumenal. The helical transmembrane segment at 323–343 (SLNIMGSAMVPSVMLVLGGML) threads the bilayer. The Cytoplasmic segment spans residues 344-356 (SEGPNESTLGLRT). A helical membrane pass occupies residues 357 to 377 (TIGISVARLLVLPLVGIGIVM). The Lumenal portion of the chain corresponds to 378-393 (SADKLGLISSADPMFK). Residues 394–414 (FVLLLQYSTPSAILLGAIASL) form a helical membrane-spanning segment. The Cytoplasmic portion of the chain corresponds to 415-424 (RGYAVREASA). A helical transmembrane segment spans residues 425 to 445 (LLFWQHIFALLSLTFYIVIFF). The Lumenal segment spans residues 446 to 457 (KLTVETTVQGMQ).

The protein belongs to the auxin efflux carrier (TC 2.A.69.2) family. In terms of tissue distribution, expressed in seedlings, rosette and cauline leaves, flowers and siliques.

It localises to the endoplasmic reticulum membrane. Functionally, involved in cellular auxin homeostasis by regulating auxin metabolism. Regulates intracellular auxin accumulation at the endoplasmic reticulum and thus auxin availability for nuclear auxin signaling. This is Protein PIN-LIKES 2 from Arabidopsis thaliana (Mouse-ear cress).